We begin with the raw amino-acid sequence, 393 residues long: MQQTKKLTHSDITIAVMSGPFLQRGEPALVSKWYRTKMALACGVDLVVELPYAFSTQKAETFANGAISILNALHVSEICFGSEDGQIENFYNTISVQKNEEETFNRLVKQFMNAGNSYAKATSEAFLHILSSEKNIDMSQPNNILGFQYIKAILMQNSSMQAQTIKRFASHYHDETFNDQHIASATSIRKQLFSENSSFTEIEPFIPKATASLLASYKQNYGTLHNWEQYFSFFKYKLMTMSPEDLRHIYEIEEGLEHRILSKIQTSSSFHSFMEALKTKRYTWTRLQRACTHILTNTTKEEIHCANIEQHAPYIRLLGMSQKGQTYLSKNKKKIELPILTHTKTFDHPTLHIDRKANSVYFSIMQEPLRAQLLKQDATHHPIRYDETTAKFL.

Gly-81, Asn-142, and Arg-167 together coordinate ATP.

The protein belongs to the TmcAL family.

The protein resides in the cytoplasm. It catalyses the reaction cytidine(34) in elongator tRNA(Met) + acetate + ATP = N(4)-acetylcytidine(34) in elongator tRNA(Met) + AMP + diphosphate. Catalyzes the formation of N(4)-acetylcytidine (ac(4)C) at the wobble position of elongator tRNA(Met), using acetate and ATP as substrates. First activates an acetate ion to form acetyladenylate (Ac-AMP) and then transfers the acetyl group to tRNA to form ac(4)C34. The polypeptide is tRNA(Met) cytidine acetate ligase (Bacillus cereus (strain AH187)).